The primary structure comprises 333 residues: Probable tRNA-dihydrouridine synthase 1 (333 aa).

Residues 17-19 and Gln71 each bind FMN; that span reads PMA. The active-site Proton donor is the Cys102. Residues Lys141, 202 to 204, and 226 to 227 contribute to the FMN site; these read NGD and GR.

Belongs to the Dus family. FMN serves as cofactor.

The catalysed reaction is a 5,6-dihydrouridine in tRNA + NAD(+) = a uridine in tRNA + NADH + H(+). It catalyses the reaction a 5,6-dihydrouridine in tRNA + NADP(+) = a uridine in tRNA + NADPH + H(+). In terms of biological role, catalyzes the synthesis of 5,6-dihydrouridine (D), a modified base found in the D-loop of most tRNAs, via the reduction of the C5-C6 double bond in target uridines. This chain is Probable tRNA-dihydrouridine synthase 1 (dus1), found in Bacillus subtilis (strain 168).